The following is a 1040-amino-acid chain: Multidrug resistance protein MdtB (1040 aa).

The next 12 helical transmembrane spans lie at 16–36, 347–367, 369–389, 396–416, 440–460, 472–492, 537–557, 863–883, 888–908, 911–931, 968–988, and 998–1018; these read FIMRPVATTLLMVAILLAGII, LMMAIALVVMIIYLFLRNIPA, IIPGVAVPLSLIGTFAVMVFL, LTLMALTIATGFVVDDAIVVI, IGFTIISLTFSLIAVLIPLLF, FAITLAVAILISAVVSLTLTP, WLTLSVALSTLLLSVLLWVFI, LGSTVWLIVAAVVAMYIVLGI, FIHPITILSTLPTAGVGALLA, IAGSELDVIAIIGIILLIGIV, ILMTTLAALLGALPLMLSTGV, and IGMVGGLIVSQVLTLFTTPVI.

Belongs to the resistance-nodulation-cell division (RND) (TC 2.A.6) family. MdtB subfamily. Part of a tripartite efflux system composed of MdtA, MdtB and MdtC. MdtB forms a heteromultimer with MdtC.

The protein localises to the cell inner membrane. Functionally, the MdtABC tripartite complex confers resistance against novobiocin and deoxycholate. The protein is Multidrug resistance protein MdtB of Escherichia coli (strain 55989 / EAEC).